We begin with the raw amino-acid sequence, 104 residues long: Phosphoribosyl-ATP pyrophosphatase (104 aa).

This sequence belongs to the PRA-PH family.

The protein localises to the cytoplasm. The catalysed reaction is 1-(5-phospho-beta-D-ribosyl)-ATP + H2O = 1-(5-phospho-beta-D-ribosyl)-5'-AMP + diphosphate + H(+). Its pathway is amino-acid biosynthesis; L-histidine biosynthesis; L-histidine from 5-phospho-alpha-D-ribose 1-diphosphate: step 2/9. The polypeptide is Phosphoribosyl-ATP pyrophosphatase (Erythrobacter litoralis (strain HTCC2594)).